A 494-amino-acid polypeptide reads, in one-letter code: Acetyl-coenzyme A carboxylase carboxyl transferase subunit beta, chloroplastic (494 aa).

The region spanning 230–494 (LWVQCENCYG…LHGFFPLNQN (265 aa)) is the CoA carboxyltransferase N-terminal domain. Zn(2+) contacts are provided by Cys-234, Cys-237, Cys-253, and Cys-256. The segment at 234–256 (CENCYGLNYKKFFRSKMNICEQC) adopts a C4-type zinc-finger fold.

It belongs to the AccD/PCCB family. In terms of assembly, acetyl-CoA carboxylase is a heterohexamer composed of biotin carboxyl carrier protein, biotin carboxylase and 2 subunits each of ACCase subunit alpha and ACCase plastid-coded subunit beta (accD). It depends on Zn(2+) as a cofactor.

The protein localises to the plastid. The protein resides in the chloroplast stroma. It catalyses the reaction N(6)-carboxybiotinyl-L-lysyl-[protein] + acetyl-CoA = N(6)-biotinyl-L-lysyl-[protein] + malonyl-CoA. It participates in lipid metabolism; malonyl-CoA biosynthesis; malonyl-CoA from acetyl-CoA: step 1/1. Functionally, component of the acetyl coenzyme A carboxylase (ACC) complex. Biotin carboxylase (BC) catalyzes the carboxylation of biotin on its carrier protein (BCCP) and then the CO(2) group is transferred by the transcarboxylase to acetyl-CoA to form malonyl-CoA. The protein is Acetyl-coenzyme A carboxylase carboxyl transferase subunit beta, chloroplastic of Drimys granadensis.